Here is a 136-residue protein sequence, read N- to C-terminus: Protein NrdI (136 aa).

Belongs to the NrdI family.

Functionally, probably involved in ribonucleotide reductase function. In Escherichia coli O1:K1 / APEC, this protein is Protein NrdI.